Reading from the N-terminus, the 213-residue chain is von Hippel-Lindau disease tumor suppressor (213 aa).

Residues 1–65 (MPRRAENWDE…AGRPRPVLRS (65 aa)) are disordered. Positions 8–54 (WDEAEVGAEEAGVEEYGPEEDGGEESGAEESGPEESGPEELGAEEEM) are enriched in acidic residues. 8 tandem repeats follow at residues 14–18 (GAEEA), 19–23 (GVEEY), 24–28 (GPEED), 29–33 (GGEES), 34–38 (GAEES), 39–43 (GPEES), 44–48 (GPEEL), and 49–53 (GAEEE). The interval 14 to 53 (GAEEAGVEEYGPEEDGGEESGAEESGPEESGPEELGAEEE) is 8 X 5 AA tandem repeats of G-[PAVG]-E-E-[DAYSLE]. Residues 100–155 (TLPPGTGRRIHSYRGHLWLFRDAGTHDGLLVNQTELFVPSLNVDGQPIFANITLPV) form an involved in binding to CCT complex region. Positions 157–166 (TLKERCLQVV) are interaction with Elongin BC complex.

It belongs to the VHL family. In terms of assembly, component of the VCB (VHL-Elongin BC-CUL2) complex; this complex acts as a ubiquitin-ligase E3 and directs proteasome-dependent degradation of targeted proteins. Interacts with CUL2; this interaction is dependent on the integrity of the trimeric VCB complex. Interacts (via the beta domain) with HIF1A (via the NTAD domain); this interaction mediates degradation of HIF1A in normoxia and, in hypoxia, prevents ubiquitination and degradation of HIF1A by mediating hypoxia-induced translocation to the nucleus, a process which requires a hypoxia-dependent regulatory signal. Interacts with ADRB2; the interaction, in normoxia, is dependent on hydroxylation of ADRB2 and the subsequent VCB-mediated ubiquitination and degradation of ADRB2. Under hypoxia, hydroxylation, interaction with VHL, ubiquitination and subsequent degradation of ADRB2 are dramatically decreased. Interacts with RNF139, USP33 and JADE1. Found in a complex composed of LIMD1, VHL, EGLN1/PHD2, ELOB and CUL2. Isoform 1 and isoform 3 interact with LIMD1 (via LIM zinc-binding 2), AJUBA (via LIM domains) and WTIP (via LIM domains). Interacts with EPAS1. Interacts with CARD9. Interacts with DCUN1D1 independently of CUL2; this interaction engages DCUN1D1 in the VCB complex and triggers CUL2 neddylation and consequently cullin ring ligase (CRL) substrates polyubiquitylation. Interacts with ALAS1 (hydroxylated form). Interacts with IGFBP1. In terms of tissue distribution, expressed in the adult and fetal brain and kidney.

The protein resides in the cytoplasm. Its subcellular location is the cell membrane. It is found in the endoplasmic reticulum. It localises to the nucleus. It participates in protein modification; protein ubiquitination. In terms of biological role, involved in the ubiquitination and subsequent proteasomal degradation via the von Hippel-Lindau ubiquitination complex. Seems to act as a target recruitment subunit in the E3 ubiquitin ligase complex and recruits hydroxylated hypoxia-inducible factor (HIF) under normoxic conditions. Involved in transcriptional repression through interaction with HIF1A, HIF1AN and histone deacetylases. Ubiquitinates, in an oxygen-responsive manner, ADRB2. Acts as a negative regulator of mTORC1 by promoting ubiquitination and degradation of RPTOR. This chain is von Hippel-Lindau disease tumor suppressor (VHL), found in Homo sapiens (Human).